Reading from the N-terminus, the 200-residue chain is dTTP/UTP pyrophosphatase (200 aa).

Asp-72 acts as the Proton acceptor in catalysis.

The protein belongs to the Maf family. YhdE subfamily. A divalent metal cation serves as cofactor.

The protein localises to the cytoplasm. It catalyses the reaction dTTP + H2O = dTMP + diphosphate + H(+). The enzyme catalyses UTP + H2O = UMP + diphosphate + H(+). In terms of biological role, nucleoside triphosphate pyrophosphatase that hydrolyzes dTTP and UTP. May have a dual role in cell division arrest and in preventing the incorporation of modified nucleotides into cellular nucleic acids. The chain is dTTP/UTP pyrophosphatase from Pseudomonas savastanoi pv. phaseolicola (strain 1448A / Race 6) (Pseudomonas syringae pv. phaseolicola (strain 1448A / Race 6)).